The primary structure comprises 202 residues: Securin-2 (202 aa).

The interval 60-105 is disordered; that stretch reads TRKALGTVNRATEKSVKTNGPRKQKQPSFSAKKMTEKTVKTKSSVP. The D-box motif lies at 61–64; the sequence is RKAL. The SH3-binding signature appears at 163 to 173; that stretch reads PPSPVKMPSPP.

Belongs to the securin family. In terms of tissue distribution, expressed at low levels in the pituitary, liver, spleen, prostate, testis, ovary, small intestine and colon. Also expressed in various pituitary, testicular, liver and ovarian tumors.

It is found in the cytoplasm. The protein resides in the nucleus. This chain is Securin-2 (PTTG2), found in Homo sapiens (Human).